Here is a 187-residue protein sequence, read N- to C-terminus: Elongation factor P (187 aa).

It belongs to the elongation factor P family.

It localises to the cytoplasm. It participates in protein biosynthesis; polypeptide chain elongation. Its function is as follows. Involved in peptide bond synthesis. Stimulates efficient translation and peptide-bond synthesis on native or reconstituted 70S ribosomes in vitro. Probably functions indirectly by altering the affinity of the ribosome for aminoacyl-tRNA, thus increasing their reactivity as acceptors for peptidyl transferase. The chain is Elongation factor P from Paenarthrobacter aurescens (strain TC1).